The primary structure comprises 446 residues: sn-2 acyl-lipid omega-3 desaturase (ferredoxin), chloroplastic (446 aa).

The transit peptide at 1–65 directs the protein to the chloroplast; sequence MANLVLSECG…DGFTRNWALN (65 aa). Helical transmembrane passes span 118–138 and 141–161; these read LSYV…AAYL and WIVW…LFVL. Positions 163–167 match the Histidine box-1 motif; that stretch reads HDCGH. A Histidine box-2 motif is present at residues 199-203; that stretch reads HRTHH. 3 helical membrane passes run 231–250, 279–299, and 302–322; these read RFFR…YLWA, TACW…IGPI, and LKLY…VTYL. The Histidine box-3 signature appears at 366-370; the sequence is HVIHH.

This sequence belongs to the fatty acid desaturase type 1 family. As to expression, most abundant in leaves and seedlings.

The protein resides in the plastid. It is found in the chloroplast inner membrane. It catalyses the reaction a (7Z,10Z)-hexadecadienoyl-containing glycerolipid + 2 reduced [2Fe-2S]-[ferredoxin] + O2 + 2 H(+) = a (7Z,10Z,13Z)-hexadecatrienoyl-containing glycerolipid + 2 oxidized [2Fe-2S]-[ferredoxin] + 2 H2O. The catalysed reaction is a (9Z,12Z)-octadecadienoyl-containing glycerolipid + 2 reduced [2Fe-2S]-[ferredoxin] + O2 + 2 H(+) = (9Z,12Z,15Z)-octadecatrienoyl-containing glycerolipid + 2 oxidized [2Fe-2S]-[ferredoxin] + 2 H2O. The protein operates within lipid metabolism; polyunsaturated fatty acid biosynthesis. Chloroplast omega-3 fatty acid desaturase introduces the third double bond in the biosynthesis of 16:3 and 18:3 fatty acids, important constituents of plant membranes. It is thought to use ferredoxin as an electron donor and to act on fatty acids esterified to galactolipids, sulfolipids and phosphatidylglycerol. The sequence is that of sn-2 acyl-lipid omega-3 desaturase (ferredoxin), chloroplastic from Arabidopsis thaliana (Mouse-ear cress).